Reading from the N-terminus, the 282-residue chain is Biotin synthase (282 aa).

In terms of domain architecture, Radical SAM core spans 1 to 228; it reads MQEIFLCSIS…NARLMVAGGR (228 aa). Residues Cys17, Cys21, and Cys24 each coordinate [4Fe-4S] cluster. Cys61, Cys96, Cys154, and Arg221 together coordinate [2Fe-2S] cluster.

Belongs to the radical SAM superfamily. Biotin synthase family. As to quaternary structure, homodimer. Requires [4Fe-4S] cluster as cofactor. [2Fe-2S] cluster serves as cofactor.

The enzyme catalyses (4R,5S)-dethiobiotin + (sulfur carrier)-SH + 2 reduced [2Fe-2S]-[ferredoxin] + 2 S-adenosyl-L-methionine = (sulfur carrier)-H + biotin + 2 5'-deoxyadenosine + 2 L-methionine + 2 oxidized [2Fe-2S]-[ferredoxin]. The protein operates within cofactor biosynthesis; biotin biosynthesis; biotin from 7,8-diaminononanoate: step 2/2. Its function is as follows. Catalyzes the conversion of dethiobiotin (DTB) to biotin by the insertion of a sulfur atom into dethiobiotin via a radical-based mechanism. This is Biotin synthase from Helicobacter pylori (strain ATCC 700392 / 26695) (Campylobacter pylori).